We begin with the raw amino-acid sequence, 266 residues long: Imidazole glycerol phosphate synthase subunit HisF (266 aa).

Residues Asp-11 and Asp-130 contribute to the active site.

This sequence belongs to the HisA/HisF family. Heterodimer of HisH and HisF.

It is found in the cytoplasm. The enzyme catalyses 5-[(5-phospho-1-deoxy-D-ribulos-1-ylimino)methylamino]-1-(5-phospho-beta-D-ribosyl)imidazole-4-carboxamide + L-glutamine = D-erythro-1-(imidazol-4-yl)glycerol 3-phosphate + 5-amino-1-(5-phospho-beta-D-ribosyl)imidazole-4-carboxamide + L-glutamate + H(+). It participates in amino-acid biosynthesis; L-histidine biosynthesis; L-histidine from 5-phospho-alpha-D-ribose 1-diphosphate: step 5/9. Functionally, IGPS catalyzes the conversion of PRFAR and glutamine to IGP, AICAR and glutamate. The HisF subunit catalyzes the cyclization activity that produces IGP and AICAR from PRFAR using the ammonia provided by the HisH subunit. In Verminephrobacter eiseniae (strain EF01-2), this protein is Imidazole glycerol phosphate synthase subunit HisF.